Here is a 437-residue protein sequence, read N- to C-terminus: GTPase Der (437 aa).

2 consecutive EngA-type G domains span residues 3–168 and 178–353; these read PLIA…PETE and IQLA…QNRS. GTP-binding positions include 9-16, 56-60, 120-123, 184-191, 231-235, and 296-299; these read GRPNVGKS, DTGGY, NKVE, DTAGL, and NKWD. Positions 354 to 437 constitute a KH-like domain; sequence RKISTSVLNK…VPISMRFMQK (84 aa).

It belongs to the TRAFAC class TrmE-Era-EngA-EngB-Septin-like GTPase superfamily. EngA (Der) GTPase family. Associates with the 50S ribosomal subunit.

Functionally, GTPase that plays an essential role in the late steps of ribosome biogenesis. This chain is GTPase Der, found in Pelodictyon phaeoclathratiforme (strain DSM 5477 / BU-1).